The chain runs to 119 residues: Protein SPIRAL1 (119 aa).

Over residues 1–11 the composition is skewed to gly residues; it reads MGRGNSCGGGQ. Disordered stretches follow at residues 1 to 47 and 85 to 105; these read MGRG…PPVT and EGQNTGNFLTDRPSTKVHAAP. Pro residues predominate over residues 24 to 34; the sequence is APKPVPAPRPA.

The protein belongs to the SPIRAL1 family. Post-translationally, ubiquitinated. Upon salt-stress induction, it is subject to proteasome-dependent degradation. Ubiquitous. High expression was associated with tissues undergoing rapid cell expansion, including the root elongation zone, hypocotyls of dark grown-seedlings, and cotyledons of light-grown seedlings.

Its subcellular location is the cytoplasm. It localises to the cytoskeleton. It is found in the phragmoplast. The protein localises to the spindle. In terms of biological role, required for directional control of cell elongation. Stabilizes growing ends of cortical microtubules and influences their dynamic properties. Acts redundantly with SP1Ls in maintaining the cortical microtubules organization essential for anisotropic cell growth. Plays a key role in salt stress-induced microtubules disassembly. In Arabidopsis thaliana (Mouse-ear cress), this protein is Protein SPIRAL1 (SPR1).